A 1009-amino-acid polypeptide reads, in one-letter code: Membrane alanyl aminopeptidase (1009 aa).

Positions 1–15 (MAAIKLLVLSLACAC) are cleaved as a signal peptide. The propeptide at 16 to 52 (VIAHSPIPPASRTIFLDERLEGGAFENIDAFENIELS) is activation peptide. 338–342 (GAMEN) serves as a coordination point for substrate. Zn(2+) is bound at residue His-374. Glu-375 (proton acceptor) is an active-site residue. Zn(2+) is bound by residues His-378 and Glu-397. Residue Asn-906 is glycosylated (N-linked (GlcNAc...) asparagine). Residues 955-980 (PSTSTTSTTAAPTTVTQPTITEPSTP) form a disordered region. Asp-987 carries GPI-anchor amidated aspartate lipidation. The propeptide at 988–1009 (SAMTSFASLFIISLGAILHLIL) is removed in mature form.

Belongs to the peptidase M1 family. Zn(2+) is required as a cofactor.

The protein localises to the cell membrane. Functionally, binds to the B.thuringiensis toxin, CryIA(C). The polypeptide is Membrane alanyl aminopeptidase (Heliothis virescens (Tobacco budworm moth)).